We begin with the raw amino-acid sequence, 429 residues long: Tol-Pal system protein TolB (429 aa).

A signal peptide spans 1–28 (MSITPSFSRRSVVSLLAAGAFSSMSAFA).

This sequence belongs to the TolB family. The Tol-Pal system is composed of five core proteins: the inner membrane proteins TolA, TolQ and TolR, the periplasmic protein TolB and the outer membrane protein Pal. They form a network linking the inner and outer membranes and the peptidoglycan layer.

Its subcellular location is the periplasm. Its function is as follows. Part of the Tol-Pal system, which plays a role in outer membrane invagination during cell division and is important for maintaining outer membrane integrity. This chain is Tol-Pal system protein TolB, found in Polaromonas naphthalenivorans (strain CJ2).